Here is a 562-residue protein sequence, read N- to C-terminus: Arginine--tRNA ligase (562 aa).

Positions 122–132 match the 'HIGH' region motif; the sequence is PNIAKPISMGH.

Belongs to the class-I aminoacyl-tRNA synthetase family. In terms of assembly, monomer.

Its subcellular location is the cytoplasm. It carries out the reaction tRNA(Arg) + L-arginine + ATP = L-arginyl-tRNA(Arg) + AMP + diphosphate. The protein is Arginine--tRNA ligase of Pediococcus pentosaceus (strain ATCC 25745 / CCUG 21536 / LMG 10740 / 183-1w).